Here is a 256-residue protein sequence, read N- to C-terminus: Acetyl-coenzyme A carboxylase carboxyl transferase subunit alpha (256 aa).

The 236-residue stretch at 1 to 236 (MTKITRIIKE…KEEIAAELDS (236 aa)) folds into the CoA carboxyltransferase C-terminal domain.

This sequence belongs to the AccA family. Acetyl-CoA carboxylase is a heterohexamer composed of biotin carboxyl carrier protein (AccB), biotin carboxylase (AccC) and two subunits each of ACCase subunit alpha (AccA) and ACCase subunit beta (AccD).

It is found in the cytoplasm. It carries out the reaction N(6)-carboxybiotinyl-L-lysyl-[protein] + acetyl-CoA = N(6)-biotinyl-L-lysyl-[protein] + malonyl-CoA. The protein operates within lipid metabolism; malonyl-CoA biosynthesis; malonyl-CoA from acetyl-CoA: step 1/1. Component of the acetyl coenzyme A carboxylase (ACC) complex. First, biotin carboxylase catalyzes the carboxylation of biotin on its carrier protein (BCCP) and then the CO(2) group is transferred by the carboxyltransferase to acetyl-CoA to form malonyl-CoA. This is Acetyl-coenzyme A carboxylase carboxyl transferase subunit alpha from Streptococcus sanguinis (strain SK36).